The chain runs to 197 residues: Sodium/potassium-transporting ATPase subunit beta-1-interacting protein 3 (197 aa).

Transmembrane regions (helical) follow at residues 2–22 (GCCTGRCSLICLCALQLVSAL), 35–55 (APILGNFLHIIVVILGLFGTI), 62–82 (IMVYTVWTALWVTWNVFIICF), and 152–172 (VQILLSLVGFVYACYVISISM).

It belongs to the NKAIN family. Interacts with ATP1B1.

It localises to the cell membrane. The protein is Sodium/potassium-transporting ATPase subunit beta-1-interacting protein 3 (NKAIN3) of Homo sapiens (Human).